The primary structure comprises 309 residues: Homoserine kinase (309 aa).

Residue 91–101 coordinates ATP; the sequence is PIGSGLGSSAC.

Belongs to the GHMP kinase family. Homoserine kinase subfamily.

It is found in the cytoplasm. The enzyme catalyses L-homoserine + ATP = O-phospho-L-homoserine + ADP + H(+). It functions in the pathway amino-acid biosynthesis; L-threonine biosynthesis; L-threonine from L-aspartate: step 4/5. In terms of biological role, catalyzes the ATP-dependent phosphorylation of L-homoserine to L-homoserine phosphate. This is Homoserine kinase (thrB) from Serratia marcescens.